The chain runs to 147 residues: Allograft inflammatory factor 1 (147 aa).

Ser-2 bears the N-acetylserine mark. An N6-acetyllysine modification is found at Lys-11. Ser-39 is subject to Phosphoserine. In terms of domain architecture, EF-hand 1 spans 45–80 (SKLEAFKTKYMEFDLNGNGDIDIMSLKRMLEKLGVP). Ca(2+)-binding residues include Asp-58, Asn-60, Asn-62, Asp-64, Glu-98, Thr-100, and Asp-105. In terms of domain architecture, EF-hand 2; degenerate spans 81-115 (KTHLELKKLIREVSSGSEETFSYSDFLRMMLGKRS). The disordered stretch occupies residues 127 to 147 (KNKEHQKPTGPPAKKAISELP).

As to quaternary structure, homodimer (Potential). Monomer. Interacts with LCP1. As to expression, cardiac allograft, spleen and testis. Expressed by inflammatory cells (macrophages and neutrophils).

It localises to the cytoplasm. The protein resides in the cytoskeleton. It is found in the cell projection. The protein localises to the ruffle membrane. Its subcellular location is the phagocytic cup. In terms of biological role, actin-binding protein that enhances membrane ruffling and RAC activation. Enhances the actin-bundling activity of LCP1. Binds calcium. Plays a role in RAC signaling and in phagocytosis. May play an role in macrophage activation and function. Promotes the proliferation of vascular smooth muscle cells and of T-lymphocytes. Enhances lymphocyte migration. Plays a role in vascular inflammation. The polypeptide is Allograft inflammatory factor 1 (Aif1) (Rattus norvegicus (Rat)).